The following is a 133-amino-acid chain: MSMGSFGFALAVMVLAVLVASAAGAPNTNLVSSACNGNKIPSGNPFFNNLGALLVDLEKNTAFSGFDYKASRAGSGGAPTAYGRGVCKQSISQSDCTACLTNLGGRIWGISKNAIGARVQLTDCFIRYEQYSI.

The N-terminal stretch at M1–G24 is a signal peptide. One can recognise a Gnk2-homologous domain in the interval T28–I133. An alpha-D-mannopyranose-binding site is contributed by N36. Cystine bridges form between C87-C96 and C99-C124. The alpha-D-mannopyranose site is built by R118 and E129.

In terms of biological role, exerts antifungal activity through its carbohydrate-binding specificity. The protein is Antifungal protein ginkbilobin-like protein 2 of Picea glauca (White spruce).